We begin with the raw amino-acid sequence, 209 residues long: A-type ATP synthase subunit D (209 aa).

This sequence belongs to the V-ATPase D subunit family. As to quaternary structure, has multiple subunits with at least A(3), B(3), C, D, E, F, H, I and proteolipid K(x).

It is found in the cell membrane. In terms of biological role, component of the A-type ATP synthase that produces ATP from ADP in the presence of a proton gradient across the membrane. This Thermoplasma volcanium (strain ATCC 51530 / DSM 4299 / JCM 9571 / NBRC 15438 / GSS1) protein is A-type ATP synthase subunit D.